Here is a 633-residue protein sequence, read N- to C-terminus: Laccase ARB_05828 (633 aa).

A signal peptide spans 1-16 (MKRLGLAALYIGSALA). The propeptide occupies 22-47 (GPPSRNVPRDDFPMFNPLPSTDLNTR). N143 carries an N-linked (GlcNAc...) asparagine glycan. 4 residues coordinate Cu cation: H148, H150, H192, and H194. C169 and C607 form a disulfide bridge. The region spanning 224–353 (LLMTDHLHSS…GRYWVRTTPA (130 aa)) is the Plastocyanin-like domain. 2 N-linked (GlcNAc...) asparagine glycosylation sites follow: N286 and N456. H508, H511, H513, H568, C569, H570, and H574 together coordinate Cu cation.

This sequence belongs to the multicopper oxidase family. In terms of assembly, monomer. It depends on Cu cation as a cofactor.

It is found in the secreted. The catalysed reaction is 4 hydroquinone + O2 = 4 benzosemiquinone + 2 H2O. The sequence is that of Laccase ARB_05828 from Arthroderma benhamiae (strain ATCC MYA-4681 / CBS 112371) (Trichophyton mentagrophytes).